Reading from the N-terminus, the 101-residue chain is Small ribosomal subunit protein eS24 (101 aa).

Belongs to the eukaryotic ribosomal protein eS24 family.

The polypeptide is Small ribosomal subunit protein eS24 (Methanosarcina mazei (strain ATCC BAA-159 / DSM 3647 / Goe1 / Go1 / JCM 11833 / OCM 88) (Methanosarcina frisia)).